We begin with the raw amino-acid sequence, 922 residues long: Two-component sensor PprA (922 aa).

The segment covering 1-10 (MFEFSRSSSA) has biased composition (low complexity). The interval 1–22 (MFEFSRSSSAEAERPEPFSQEG) is disordered. One can recognise a PAC 1 domain in the interval 506-558 (VKTRYRLADGQGNWHWLYDEAKLLRDAQGLPSEAVGLWLDVTEQHLAAQRIAE). The 64-residue stretch at 559–622 (SEERYRVLVE…EDASALRARL (64 aa)) folds into the PAS domain. Residues 632-684 (EVPELRFNLPGQRFLWLVWAERPLFDARGELCEVQAVGRDNTPVRRAQQQLAQ) enclose the PAC 2 domain. The Histidine kinase domain maps to 697 to 916 (GLAHEVKQPL…LFVVRLPLAA (220 aa)). The residue at position 700 (His700) is a Phosphohistidine; by autocatalysis.

Autophosphorylated.

It catalyses the reaction ATP + protein L-histidine = ADP + protein N-phospho-L-histidine.. Functionally, member of the two-component regulatory system PprA/PprB involved in biofilm formation by controlling the expression of many related genes including type IVb pili major subunit flp pilin, adhesin bapA or cupE fimbriae. Functions as a heme sensor histidine kinase which is autophosphorylated at a histidine residue and transfers its phosphate group to PprB. This Pseudomonas aeruginosa (strain ATCC 15692 / DSM 22644 / CIP 104116 / JCM 14847 / LMG 12228 / 1C / PRS 101 / PAO1) protein is Two-component sensor PprA.